Here is a 217-residue protein sequence, read N- to C-terminus: Probable GTP-binding protein EngB (217 aa).

Residues 32–205 form the EngB-type G domain; it reads GTPQIAFAGR…RKIVYSLIET (174 aa). GTP-binding positions include 40–47, 67–71, 85–88, 152–155, and 184–186; these read GRSNAGKS, GKTKL, DLPG, TKID, and VSN. 2 residues coordinate Mg(2+): serine 47 and threonine 69.

This sequence belongs to the TRAFAC class TrmE-Era-EngA-EngB-Septin-like GTPase superfamily. EngB GTPase family. It depends on Mg(2+) as a cofactor.

In terms of biological role, necessary for normal cell division and for the maintenance of normal septation. The sequence is that of Probable GTP-binding protein EngB from Leptospira interrogans serogroup Icterohaemorrhagiae serovar copenhageni (strain Fiocruz L1-130).